The following is a 215-amino-acid chain: MSKPPPKPVKPGQVKVFRALYTFEPRTPDELYFEEGDIIYITDMSDTSWWKGTCKGRTGLIPSNYVAEQAESIDNPLHEAAKRGNLSWLRECLDNRVGVNGLDKAGSTALYWACHGGHKDIVEVLFTQPNVELNQQNKLGDTALHAAAWKGYADIVQLLLAKGARTDLRNNEKKLALDMATNAACASLLKKKQQGTDGARTLSNAEDYLDDEDSD.

Ser-2 is subject to N-acetylserine. The region spanning 12-71 (GQVKVFRALYTFEPRTPDELYFEEGDIIYITDMSDTSWWKGTCKGRTGLIPSNYVAEQAE) is the SH3 domain. ANK repeat units follow at residues 72-101 (SIDN…GVNG), 105-135 (AGST…ELNQ), and 139-168 (LGDT…RTDL). The interval 192–215 (KQQGTDGARTLSNAEDYLDDEDSD) is disordered. A Phosphothreonine modification is found at Thr-201. Residues Ser-203 and Ser-214 each carry the phosphoserine modification.

Interacts with C-SRC and SMN1. Interacts with FASLG.

The protein localises to the cytoplasm. In terms of biological role, induces bone resorption, acting probably through a signaling cascade which results in the secretion of factor(s) enhancing osteoclast formation and activity. The protein is Osteoclast-stimulating factor 1 (Ostf1) of Mus musculus (Mouse).